Reading from the N-terminus, the 417-residue chain is Spermidine/putrescine import ATP-binding protein PotA (417 aa).

The region spanning 5–308 (IILKDLTKVF…PANRFVAQFV (304 aa)) is the ABC transporter domain. Residue 37 to 44 (GPSGCGKT) participates in ATP binding. The insert stretch occupies residues 105-177 (DFNSKIKANL…TALKCKKINK (73 aa)).

Belongs to the ABC transporter superfamily. Spermidine/putrescine importer (TC 3.A.1.11.1) family. In terms of assembly, the complex is composed of two ATP-binding proteins (PotA), two transmembrane proteins (PotB and PotC) and a solute-binding protein (PotD).

It is found in the cell membrane. It catalyses the reaction ATP + H2O + polyamine-[polyamine-binding protein]Side 1 = ADP + phosphate + polyamineSide 2 + [polyamine-binding protein]Side 1.. Part of the ABC transporter complex PotABCD involved in spermidine/putrescine import. Responsible for energy coupling to the transport system. This Onion yellows phytoplasma (strain OY-M) protein is Spermidine/putrescine import ATP-binding protein PotA.